A 346-amino-acid chain; its full sequence is UPF0421 protein OB2406 (346 aa).

Transmembrane regions (helical) follow at residues 16–36 (IAVLLTAYICEWIGWSPVFAV), 55–75 (LIRFPASAIGAAYAVLFIALF), 102–122 (LLVATITSVAMVDVIHSNYVM), and 128–148 (LFTTTIGLSVSTLVNMFLLPP).

Belongs to the UPF0421 family.

The protein resides in the cell membrane. In Oceanobacillus iheyensis (strain DSM 14371 / CIP 107618 / JCM 11309 / KCTC 3954 / HTE831), this protein is UPF0421 protein OB2406.